The following is a 283-amino-acid chain: Protease HtpX (283 aa).

2 helical membrane-spanning segments follow: residues 4-24 and 33-53; these read ILLF…ILNV and GGIL…SLFL. Histidine 139 contributes to the Zn(2+) binding site. Glutamate 140 is a catalytic residue. Histidine 143 provides a ligand contact to Zn(2+). A run of 2 helical transmembrane segments spans residues 147-167 and 190-210; these read GDMV…IFLS and IYFL…SIIA. Glutamate 218 is a Zn(2+) binding site.

It belongs to the peptidase M48B family. It depends on Zn(2+) as a cofactor.

The protein resides in the cell inner membrane. This chain is Protease HtpX, found in Haemophilus influenzae (strain 86-028NP).